A 256-amino-acid polypeptide reads, in one-letter code: Thiazole synthase (256 aa).

Catalysis depends on K96, which acts as the Schiff-base intermediate with DXP. Residues G157, 183 to 184 (AG), and 205 to 206 (NT) contribute to the 1-deoxy-D-xylulose 5-phosphate site.

The protein belongs to the ThiG family. As to quaternary structure, homotetramer. Forms heterodimers with either ThiH or ThiS.

It localises to the cytoplasm. The catalysed reaction is [ThiS sulfur-carrier protein]-C-terminal-Gly-aminoethanethioate + 2-iminoacetate + 1-deoxy-D-xylulose 5-phosphate = [ThiS sulfur-carrier protein]-C-terminal Gly-Gly + 2-[(2R,5Z)-2-carboxy-4-methylthiazol-5(2H)-ylidene]ethyl phosphate + 2 H2O + H(+). It participates in cofactor biosynthesis; thiamine diphosphate biosynthesis. Functionally, catalyzes the rearrangement of 1-deoxy-D-xylulose 5-phosphate (DXP) to produce the thiazole phosphate moiety of thiamine. Sulfur is provided by the thiocarboxylate moiety of the carrier protein ThiS. In vitro, sulfur can be provided by H(2)S. The chain is Thiazole synthase from Bacillus cytotoxicus (strain DSM 22905 / CIP 110041 / 391-98 / NVH 391-98).